A 76-amino-acid chain; its full sequence is uncharacterized protein (76 aa).

The protein to K.pneumoniae LtrA, E.coli YjiE, and YhcS.

This is an uncharacterized protein from Escherichia coli O6:H1 (strain CFT073 / ATCC 700928 / UPEC).